The sequence spans 66 residues: Neurotoxin BmK AGP-SYPU1 (66 aa).

The LCN-type CS-alpha/beta domain maps to 2–64 (RDAYIAQNYN…KPIRIPGKCH (63 aa)). Cystine bridges form between C12–C63, C16–C36, C22–C46, and C26–C48. The propeptide at 65–66 (RR) is removed by a carboxypeptidase.

Expressed by the venom gland.

The protein resides in the secreted. In terms of biological role, alpha toxins bind voltage-independently at site-3 of sodium channels (Nav) and inhibit the inactivation of the activated channels, thereby blocking neuronal transmission. This toxin has a strong analgesic effect when administered to mice by intraperitoneal injection. The sequence is that of Neurotoxin BmK AGP-SYPU1 from Olivierus martensii (Manchurian scorpion).